The chain runs to 338 residues: Phenylalanine--tRNA ligase alpha subunit (338 aa).

Residue glutamate 252 coordinates Mg(2+).

The protein belongs to the class-II aminoacyl-tRNA synthetase family. Phe-tRNA synthetase alpha subunit type 1 subfamily. In terms of assembly, tetramer of two alpha and two beta subunits. Mg(2+) serves as cofactor.

The protein localises to the cytoplasm. The enzyme catalyses tRNA(Phe) + L-phenylalanine + ATP = L-phenylalanyl-tRNA(Phe) + AMP + diphosphate + H(+). In Fusobacterium nucleatum subsp. nucleatum (strain ATCC 25586 / DSM 15643 / BCRC 10681 / CIP 101130 / JCM 8532 / KCTC 2640 / LMG 13131 / VPI 4355), this protein is Phenylalanine--tRNA ligase alpha subunit.